A 258-amino-acid polypeptide reads, in one-letter code: MKITKIEKKKRLYLIEIDEAEHFYITEDTIVHFMLSKNKEILPEQLEEIKTFAQFSYGKNLALYYLSFKQRTEKEVKDYLIRHDINTTVISQILTQLKEEKWLDDSKYIDNILQQNLHSGDKGAFVLKQKLLQKGIESQLIEDMLKDFDFSSICIKTAQKLLKKYQSKLPKRALKDKLKQALTTKGFSYQEAQIALEDLDIENNSENEEELIYKELDKQYRKYSKKYENYELRQRLTQSLARKGFAFDAIKNALREYL.

It belongs to the RecX family.

It is found in the cytoplasm. Functionally, modulates RecA activity. This Streptococcus mutans serotype c (strain ATCC 700610 / UA159) protein is Regulatory protein RecX.